A 312-amino-acid polypeptide reads, in one-letter code: Methionyl-tRNA formyltransferase (312 aa).

112 to 115 is a (6S)-5,6,7,8-tetrahydrofolate binding site; that stretch reads SLLP.

The protein belongs to the Fmt family.

The catalysed reaction is L-methionyl-tRNA(fMet) + (6R)-10-formyltetrahydrofolate = N-formyl-L-methionyl-tRNA(fMet) + (6S)-5,6,7,8-tetrahydrofolate + H(+). Attaches a formyl group to the free amino group of methionyl-tRNA(fMet). The formyl group appears to play a dual role in the initiator identity of N-formylmethionyl-tRNA by promoting its recognition by IF2 and preventing the misappropriation of this tRNA by the elongation apparatus. This chain is Methionyl-tRNA formyltransferase, found in Dehalococcoides mccartyi (strain ATCC BAA-2266 / KCTC 15142 / 195) (Dehalococcoides ethenogenes (strain 195)).